The primary structure comprises 145 residues: Aminoglycoside N(6')-acetyltransferase type 1 (145 aa).

Residues 1 to 145 (MDIRQMNRTH…ERVIFYRKRC (145 aa)) form the N-acetyltransferase domain. Substrate-binding residues include Trp-22, His-25, Tyr-66, and Glu-79. Acetyl-CoA is bound by residues 81-83 (IFV) and 89-94 (QRGVAK). Substrate is bound at residue Asp-115. Asn-120 lines the acetyl-CoA pocket. Residue Glu-136 participates in substrate binding.

As to quaternary structure, homodimer.

The enzyme catalyses kanamycin B + acetyl-CoA = N(6')-acetylkanamycin B + CoA + H(+). In terms of biological role, catalyzes the transfer of an acetyl group from acetyl-CoA to the 6'-amino group of aminoglycoside molecules conferring resistance to antibiotics containing the purpurosamine ring. In Salmonella typhimurium (strain LT2 / SGSC1412 / ATCC 700720), this protein is Aminoglycoside N(6')-acetyltransferase type 1.